The primary structure comprises 456 residues: Gustatory receptor for sugar taste 64a (456 aa).

Residues 1–30 are disordered; it reads MKGPNLNFRKTPSKDNGVKQVESLARPETP. Over 1–91 the chain is Cytoplasmic; that stretch reads MKGPNLNFRK…RESNPRRVRF (91 aa). Residues 92–114 form a helical membrane-spanning segment; sequence AYKSIPMFVTLIFMIATSILFLS. The Extracellular portion of the chain corresponds to 115–128; the sequence is MFTHLLKIGITAKN. A helical membrane pass occupies residues 129-150; the sequence is FVGLVFFGCVLSAYVVFIRLAK. Position 131 (glycine 131) interacts with sucrose. The Cytoplasmic segment spans residues 151–182; that stretch reads KWPAVVRIWTRTEIPFTKPPYEIPKRNLSRRV. A helical membrane pass occupies residues 183 to 205; it reads QLAALAIIGLSLGEHALYQVSAI. Sucrose is bound by residues glutamate 196, histidine 197, and tyrosine 234. D-maltose contacts are provided by glutamate 196, histidine 197, tyrosine 234, asparagine 253, and threonine 257. The Extracellular portion of the chain corresponds to 206 to 245; that stretch reads LSYTRRIQMCANITTVPSFNNYMQTNYDYVFQLLPYSPII. The helical transmembrane segment at 246–271 threads the bilayer; sequence AVLILLINGACTFVWNYMDLFIMMIS. Threonine 257 is a sucrose binding site. Residues 272–318 are Cytoplasmic-facing; the sequence is KGLSYRFEQITTRIRKLEHEEVCESVFIQIREHYVKMCELLEFVDSA. The helical transmembrane segment at 319–342 threads the bilayer; sequence MSSLILLSCVNNLYFVCYQLLNVF. Topologically, residues 343–350 are extracellular; it reads NKLRWPIN. The chain crosses the membrane as a helical span at residues 351 to 373; sequence YIYFWYSLLYLIGRTAFVFLTAA. Sucrose is bound at residue tyrosine 353. Tyrosine 353 contributes to the D-maltose binding site. Over 374 to 421 the chain is Cytoplasmic; the sequence is DINEESKRGLGVLRRVSSRSWCVEVERLIFQMTTQTVALSGKKFYFLT. Residues 422–441 traverse the membrane as a helical segment; the sequence is RRLLFGMAGTIVTYELVLLQ. At 442–456 the chain is on the extracellular side; sequence FDEPNRRKGLQPLCA.

It belongs to the insect chemoreceptor superfamily. Gustatory receptor (GR) family. Gr5a subfamily. As to quaternary structure, homotetramer. Expressed in Gr5a-expressing sugar-sensing cells.

The protein localises to the cell membrane. One of the few identified sugar gustatory receptors identified so far and which promotes the starvation-induced increase of feeding motivation. Required in combination with Gr64f to detect sucrose, maltose, and glucose. This Drosophila melanogaster (Fruit fly) protein is Gustatory receptor for sugar taste 64a (Gr64a).